Here is a 172-residue protein sequence, read N- to C-terminus: Austinoid biosynthesis clusters protein J (172 aa).

This sequence belongs to the trt14 isomerase family. As to quaternary structure, homodimer.

Its pathway is secondary metabolite biosynthesis; terpenoid biosynthesis. Part of the gene cluster B that mediates the biosynthesis of the fungal meroterpenoid acetoxydehydroaustin. The first step of the pathway is the synthesis of 3,5-dimethylorsellinic acid by the polyketide synthase ausA. 3,5-dimethylorsellinic acid is then prenylated by the polyprenyl transferase ausN. Further epoxidation by the FAD-dependent monooxygenase ausM and cyclization by the probable terpene cyclase ausL lead to the formation of protoaustinoid A. Protoaustinoid A is then oxidized to spiro-lactone preaustinoid A3 by the combined action of the FAD-binding monooxygenases ausB and ausC, and the dioxygenase ausE. Acid-catalyzed keto-rearrangement and ring contraction of the tetraketide portion of preaustinoid A3 by ausJ lead to the formation of preaustinoid A4. The aldo-keto reductase ausK, with the help of ausH, is involved in the next step by transforming preaustinoid A4 into isoaustinone which is in turn hydroxylated by the P450 monooxygenase ausI to form austinolide. The cytochrome P450 monooxygenase ausG then modifies austinolide to austinol. Austinol is further acetylated to austin by the O-acetyltransferase ausP, which spontaneously changes to dehydroaustin. The cytochrome P450 monooxygenase then converts dehydroaustin is into 7-dehydrodehydroaustin. The hydroxylation catalyzed by ausR permits the second O-acetyltransferase ausQ to add an additional acetyl group to the molecule, leading to the formation of acetoxydehydroaustin. Due to genetic rearrangements of the clusters and the subsequent loss of some enzymes, the end product of the Penicillium brasilianum austinoid biosynthesis clusters is acetoxydehydroaustin. In Penicillium brasilianum, this protein is Austinoid biosynthesis clusters protein J.